Consider the following 130-residue polypeptide: Organ-specific protein P4 (130 aa).

Tandem repeats lie at residues 60–85 and 86–111. The 2 X 26 AA tandem repeats stretch occupies residues 60–111; it reads HAKENKGAIGEFEPCPNASAYGDNEIHANENKGAIGEFETRPNGSAYGDNEI. The disordered stretch occupies residues 79–130; that stretch reads AYGDNEIHANENKGAIGEFETRPNGSAYGDNEIGAEFTDDFEPRPSMTKYNA.

This sequence to organ specific protein S2. As to expression, expressed in pods.

This is Organ-specific protein P4 from Pisum sativum (Garden pea).